A 171-amino-acid chain; its full sequence is SWR1 complex subunit 6 (171 aa).

Residues Asp-63–Lys-87 are disordered. Over residues Lys-73–Gln-85 the composition is skewed to basic residues. The Zn(2+) site is built by Cys-134, Cys-137, Cys-145, Cys-148, Cys-153, Cys-157, His-161, and Cys-166. The HIT-type zinc finger occupies Cys-134–Cys-166.

It belongs to the ZNHIT1 family. Homodimer. Component of the SWR1 chromatin-remodeling complex composed of at least ARP6/ESD1/SUF3, PIE1, SWC6, SWC2 and H2AZs (HTA8, HTA9, HTA11). Interacts directly with ARP6, PIE1 and SWC2. Interacts with FLX and SUF4, two component of the transcription activator complex FRI-C, and with ASHH2 and TAF14. In terms of tissue distribution, expressed in root, lateral root primordia, shoot apex, leaves, stems, inflorescences, flowers, axillary buds, developing siliques and premature seeds.

It localises to the nucleus speckle. The protein resides in the nucleus. Component of the SWR1 complex which mediates the ATP-dependent exchange of histone H2A for the H2A variant H2A.F/Z leading to transcriptional regulation of selected genes (e.g. FLC) by chromatin remodeling. Coodinates SWR1-C, FRI-C (FLC transcription activator complex), histone methyltransferase and general transcription factors. Represses flowering by positively regulating FLC and MAF4. Binds to the promoter region of FLC chromatin. This Arabidopsis thaliana (Mouse-ear cress) protein is SWR1 complex subunit 6 (SWC6).